The following is a 350-amino-acid chain: Transcriptional activator hacA (350 aa).

A disordered region spans residues 1–118 (MKSADRFSPV…RLEMEKLESE (118 aa)). Residues 35-47 (PADTSLQTKNVVA) show a composition bias toward polar residues. 2 stretches are compositionally biased toward basic and acidic residues: residues 81–95 (KTED…ERVL) and 104–118 (SRER…LESE). The bZIP domain occupies 87-150 (EQRRIERVLR…NRLSQQVAQL (64 aa)). A basic motif region spans residues 89-142 (RRIERVLRNRAAAQTSRERKRLEMEKLESEKIDMEQQNQFLLQRLAQMEAENNR). The tract at residues 143–150 (LSQQVAQL) is leucine-zipper. 3 disordered regions span residues 152–175 (AEVR…PTLT), 194–218 (PTPS…DLTQ), and 328–350 (SLQP…AGSA). Positions 160-175 (STPTSSSPASVSPTLT) are enriched in low complexity. Composition is skewed to polar residues over residues 196–211 (PSVT…SSLA) and 329–340 (LQPSHGASTSRC).

This sequence belongs to the bZIP family. Homodimer.

It is found in the nucleus. Transcriptional activator involved in the unfolded protein response (UPR) pathway. Recognizes and binds to the UPR element (UPRE) in the promoter of UPR-regulated genes. Increases the synthesis of endoplasmic reticulum-resident proteins required for protein folding as well as components of the secretory pathway. The chain is Transcriptional activator hacA (hacA) from Emericella nidulans (strain FGSC A4 / ATCC 38163 / CBS 112.46 / NRRL 194 / M139) (Aspergillus nidulans).